Reading from the N-terminus, the 137-residue chain is Large ribosomal subunit protein uL16 (137 aa).

It belongs to the universal ribosomal protein uL16 family. As to quaternary structure, part of the 50S ribosomal subunit.

Binds 23S rRNA and is also seen to make contacts with the A and possibly P site tRNAs. The protein is Large ribosomal subunit protein uL16 of Spiroplasma kunkelii.